A 521-amino-acid chain; its full sequence is Phomenoic acid biosynthesis cluster-specific transcriptional regulator (521 aa).

Positions 46–76 (HCWQCRRSCVVCDFTQPGCQRCSAAGVSCPG) form a DNA-binding region, zn(2)-C6 fungal-type.

The protein resides in the nucleus. Transcriptional regulator; part of the gene cluster that mediates the biosynthesis of phomenoic acid, a long chain aliphatic carboxylic acid that does not appear to be essential for pathogenicity but may play a role in allowing to outcompete other fungi in the environmental niche via its antifungal properties. Positively regulates the expression of the cluster and subsequent production of phomenoic acid. This is Phomenoic acid biosynthesis cluster-specific transcriptional regulator from Leptosphaeria maculans (strain JN3 / isolate v23.1.3 / race Av1-4-5-6-7-8) (Blackleg fungus).